We begin with the raw amino-acid sequence, 351 residues long: MKAMAAEEEVDSADAGGGSGWLTGWLPTWCPTSTSHLKEAEEKMLKCVPCTYKKEPVRISNGNRIWTLMFSHNISSKTPLVLLHGFGGGLGLWALNFEDLSTDRPVYAFDLLGFGRSSRPRFDSDAEEVENQFVESIEEWRCALRLDKMILLGHNLGGFLAAAYSLKYPSRVSHLILVEPWGFPERPDLADQERPIPVWIRALGAALTPFNPLAGLRIAGPFGLSLVQRLRPDFKRKYSSMFEDDTVTEYIYHCNVQTPSGETAFKNMTIPYGWAKRPMLQRIGGLHPDIPVSVIFGARSCIDGNSGTSIQSLRPKSYVKTIAILGAGHYVYADQPEEFNQKVKEICHTVD.

An AB hydrolase-1 domain is found at 79–184 (PLVLLHGFGG…LILVEPWGFP (106 aa)). S124 bears the Phosphoserine mark. An HXXXXD motif motif is present at residues 329–334 (HYVYAD).

This sequence belongs to the peptidase S33 family. ABHD4/ABHD5 subfamily. In terms of assembly, interacts with ADRP. Interacts with PLIN. Interacts with and PNPLA2. Interacts with PLIN5; promotes interaction with PNPLA2. In terms of tissue distribution, highly expressed in the adipose tissue and testes. Weakly expressed in the liver, muscle, kidney, and heart. Expressed by upper epidermal layers and dermal fibroblasts in skin, hepatocytes and hypothalamus in brain (at protein level).

It localises to the cytoplasm. It is found in the lipid droplet. The protein resides in the cytosol. The enzyme catalyses a 1-acyl-sn-glycero-3-phosphate + an acyl-CoA = a 1,2-diacyl-sn-glycero-3-phosphate + CoA. It catalyses the reaction 1-(9Z-octadecenoyl)-sn-glycero-3-phosphate + (9Z)-octadecenoyl-CoA = 1,2-di-(9Z-octadecenoyl)-sn-glycero-3-phosphate + CoA. The catalysed reaction is 1-(9Z-octadecenoyl)-sn-glycero-3-phosphate + hexadecanoyl-CoA = 1-(9Z)-octadecenoyl-2-hexadecanoyl-sn-glycero-3-phosphate + CoA. It carries out the reaction 1-(9Z-octadecenoyl)-sn-glycero-3-phosphate + octadecanoyl-CoA = 1-(9Z-octadecenoyl)-2-octadecanoyl-sn-glycero-3-phosphate + CoA. The enzyme catalyses 1-(9Z-octadecenoyl)-sn-glycero-3-phosphate + (5Z,8Z,11Z,14Z)-eicosatetraenoyl-CoA = 1-(9Z)-octadecenoyl-2-(5Z,8Z,11Z,14Z)-eicosatetraenoyl-sn-glycero-3-phosphate + CoA. It catalyses the reaction eicosanoyl-CoA + 1-(9Z-octadecenoyl)-sn-glycero-3-phosphate = 1-(9Z)-octadecenoyl-2-eicosanoyl-sn-glycero-3-phosphate + CoA. The catalysed reaction is 1-hexadecanoyl-sn-glycero-3-phosphate + (9Z)-octadecenoyl-CoA = 1-hexadecanoyl-2-(9Z-octadecenoyl)-sn-glycero-3-phosphate + CoA. It carries out the reaction 1-octadecanoyl-sn-glycero-3-phosphate + (9Z)-octadecenoyl-CoA = 1-octadecanoyl-2-(9Z-octadecenoyl)-sn-glycero-3-phosphate + CoA. The enzyme catalyses 1-(5Z,8Z,11Z,14Z-eicosatetraenoyl)-sn-glycero-3-phosphate + (9Z)-octadecenoyl-CoA = 1-(5Z,8Z,11Z,14Z)-eicosatetraenoyl-2-(9Z)-octadecenoyl-sn-glycero-3-phosphate + CoA. Acyltransferase activity is inhibited by detergents such as Triton X-100 and 3-[(3-cholamidopropyl)dimethylammonio]-1-propanesulfonate (CHAPS). Acyltransferase activity is inhibited by the presence of magnesium and calcium. Functionally, coenzyme A-dependent lysophosphatidic acid acyltransferase that catalyzes the transfer of an acyl group on a lysophosphatidic acid. Functions preferentially with 1-oleoyl-lysophosphatidic acid followed by 1-palmitoyl-lysophosphatidic acid, 1-stearoyl-lysophosphatidic acid and 1-arachidonoyl-lysophosphatidic acid as lipid acceptor. Functions preferentially with arachidonoyl-CoA followed by oleoyl-CoA as acyl group donors. Functions in phosphatidic acid biosynthesis. May regulate the cellular storage of triacylglycerol through activation of the phospholipase PNPLA2. Involved in keratinocyte differentiation. Regulates lipid droplet fusion. The protein is 1-acylglycerol-3-phosphate O-acyltransferase ABHD5 of Mus musculus (Mouse).